An 89-amino-acid chain; its full sequence is Small ribosomal subunit protein uS15 (89 aa).

Over residues 1-21 (MALSKEQKTETLKEFGLHETD) the composition is skewed to basic and acidic residues. Positions 1-22 (MALSKEQKTETLKEFGLHETDT) are disordered.

This sequence belongs to the universal ribosomal protein uS15 family. Part of the 30S ribosomal subunit. Forms a bridge to the 50S subunit in the 70S ribosome, contacting the 23S rRNA.

Functionally, one of the primary rRNA binding proteins, it binds directly to 16S rRNA where it helps nucleate assembly of the platform of the 30S subunit by binding and bridging several RNA helices of the 16S rRNA. Its function is as follows. Forms an intersubunit bridge (bridge B4) with the 23S rRNA of the 50S subunit in the ribosome. The chain is Small ribosomal subunit protein uS15 from Corynebacterium jeikeium (strain K411).